We begin with the raw amino-acid sequence, 413 residues long: S-adenosylmethionine synthase (413 aa).

His15 serves as a coordination point for ATP. Asp17 is a binding site for Mg(2+). A K(+)-binding site is contributed by Glu43. L-methionine is bound by residues Glu56 and Gln100. A flexible loop region spans residues 100–110 (QSPDISQGVNE). Residues 171 to 173 (DGK), 248 to 249 (KF), Asp257, 263 to 264 (RK), Ala280, and Lys284 contribute to the ATP site. An L-methionine-binding site is contributed by Asp257. An L-methionine-binding site is contributed by Lys288.

The protein belongs to the AdoMet synthase family. In terms of assembly, homotetramer; dimer of dimers. Mg(2+) serves as cofactor. It depends on K(+) as a cofactor.

It is found in the cytoplasm. The enzyme catalyses L-methionine + ATP + H2O = S-adenosyl-L-methionine + phosphate + diphosphate. Its pathway is amino-acid biosynthesis; S-adenosyl-L-methionine biosynthesis; S-adenosyl-L-methionine from L-methionine: step 1/1. Functionally, catalyzes the formation of S-adenosylmethionine (AdoMet) from methionine and ATP. The overall synthetic reaction is composed of two sequential steps, AdoMet formation and the subsequent tripolyphosphate hydrolysis which occurs prior to release of AdoMet from the enzyme. This chain is S-adenosylmethionine synthase, found in Prochlorococcus marinus (strain MIT 9215).